A 189-amino-acid chain; its full sequence is Phosphomevalonate kinase (189 aa).

ATP-binding positions include Lys10–Asp16 and Arg138. Asn168 is a binding site for substrate.

It localises to the cytoplasm. Its subcellular location is the cytosol. The catalysed reaction is (R)-5-phosphomevalonate + ATP = (R)-5-diphosphomevalonate + ADP. The protein operates within isoprenoid biosynthesis; isopentenyl diphosphate biosynthesis via mevalonate pathway; isopentenyl diphosphate from (R)-mevalonate: step 2/3. The chain is Phosphomevalonate kinase from Drosophila melanogaster (Fruit fly).